The chain runs to 262 residues: Nodulation protein J (262 aa).

Residues 33 to 259 enclose the ABC transmembrane type-2 domain; that stretch reads ASLLGNLADP…FVSIALLRRR (227 aa). 6 consecutive transmembrane segments (helical) span residues 43–63, 67–87, 119–139, 148–168, 177–197, and 236–256; these read MIYIFGLGSGLGVMLGNVGGV, AFLAAGMVATSAMTASTFETI, AWAATKASLAGTAIGIVTATL, IYVFPVIALTGLAFASLSMVV, YLVFYQSLVITPMLVLSGSVF, and LHLGALCLYIVLPFFVSIALL.

It belongs to the ABC-2 integral membrane protein family. Lipooligosaccharide exporter (TC 3.A.1.102) subfamily. The complex is composed of two ATP-binding proteins (NodI) and two transmembrane proteins (NodJ).

The protein resides in the cell inner membrane. Its function is as follows. Part of the ABC transporter complex NodIJ involved in the export of the nodulation factors (Nod factors), the bacterial signal molecules that induce symbiosis and subsequent nodulation induction. Nod factors are LCO (lipo-chitin oligosaccharide), a modified beta-1,4-linked N-acetylglucosamine oligosaccharide. This subunit encodes the transporter. This is Nodulation protein J (nodJ) from Neorhizobium galegae (Rhizobium galegae).